The primary structure comprises 66 residues: MNLTFLGLCIACMGVSVGEGLLMNGLFKSVARQPDMLSEFRSLMFLGVAFIEGTFFVTLVFSFIIK.

The next 2 helical transmembrane spans lie at 3–23 (LTFL…GLLM) and 45–65 (FLGV…SFII).

Belongs to the ATPase C chain family. F-type ATPases have 2 components, F(1) - the catalytic core - and F(0) - the membrane proton channel. F(1) has five subunits: alpha(3), beta(3), gamma(1), delta(1), epsilon(1). F(0) has three main subunits: a(1), b(2) and c(10-14). The alpha and beta chains form an alternating ring which encloses part of the gamma chain. F(1) is attached to F(0) by a central stalk formed by the gamma and epsilon chains, while a peripheral stalk is formed by the delta and b chains.

The protein resides in the cell membrane. Functionally, f(1)F(0) ATP synthase produces ATP from ADP in the presence of a proton or sodium gradient. F-type ATPases consist of two structural domains, F(1) containing the extramembraneous catalytic core and F(0) containing the membrane proton channel, linked together by a central stalk and a peripheral stalk. During catalysis, ATP synthesis in the catalytic domain of F(1) is coupled via a rotary mechanism of the central stalk subunits to proton translocation. In terms of biological role, key component of the F(0) channel; it plays a direct role in translocation across the membrane. A homomeric c-ring of between 10-14 subunits forms the central stalk rotor element with the F(1) delta and epsilon subunits. This chain is ATP synthase subunit c, found in Streptococcus pneumoniae serotype 19F (strain G54).